Consider the following 226-residue polypeptide: Urease accessory protein UreF (226 aa).

The protein belongs to the UreF family. As to quaternary structure, ureD, UreF and UreG form a complex that acts as a GTP-hydrolysis-dependent molecular chaperone, activating the urease apoprotein by helping to assemble the nickel containing metallocenter of UreC. The UreE protein probably delivers the nickel.

It localises to the cytoplasm. Its function is as follows. Required for maturation of urease via the functional incorporation of the urease nickel metallocenter. This is Urease accessory protein UreF from Burkholderia lata (strain ATCC 17760 / DSM 23089 / LMG 22485 / NCIMB 9086 / R18194 / 383).